A 182-amino-acid chain; its full sequence is Small ribosomal subunit protein uS4c (182 aa).

An S4 RNA-binding domain is found at 82 to 143 (MRLDNILFRL…KQRSKALIQN (62 aa)).

It belongs to the universal ribosomal protein uS4 family. As to quaternary structure, part of the 30S ribosomal subunit. Contacts protein S5. The interaction surface between S4 and S5 is involved in control of translational fidelity.

It localises to the plastid. The protein resides in the chloroplast. In terms of biological role, one of the primary rRNA binding proteins, it binds directly to 16S rRNA where it nucleates assembly of the body of the 30S subunit. With S5 and S12 plays an important role in translational accuracy. This is Small ribosomal subunit protein uS4c (rps4) from Iris domestica (Leopard lily).